A 96-amino-acid chain; its full sequence is Large ribosomal subunit protein bL27 (96 aa).

A propeptide spanning residues 1 to 9 is cleaved from the precursor; the sequence is MLRLDLQFF. The segment at 14–35 is disordered; that stretch reads GVGSTKNGRDSQSKRLGAKRAD.

This sequence belongs to the bacterial ribosomal protein bL27 family. In terms of processing, the N-terminus is cleaved by ribosomal processing cysteine protease Prp.

The protein is Large ribosomal subunit protein bL27 of Bacillus cytotoxicus (strain DSM 22905 / CIP 110041 / 391-98 / NVH 391-98).